The primary structure comprises 533 residues: Glucose-6-phosphate isomerase (533 aa).

E341 functions as the Proton donor in the catalytic mechanism. Residues H372 and K501 contribute to the active site.

Belongs to the GPI family.

The protein resides in the cytoplasm. It carries out the reaction alpha-D-glucose 6-phosphate = beta-D-fructose 6-phosphate. Its pathway is carbohydrate biosynthesis; gluconeogenesis. The protein operates within carbohydrate degradation; glycolysis; D-glyceraldehyde 3-phosphate and glycerone phosphate from D-glucose: step 2/4. In terms of biological role, catalyzes the reversible isomerization of glucose-6-phosphate to fructose-6-phosphate. The protein is Glucose-6-phosphate isomerase of Cereibacter sphaeroides (strain ATCC 17023 / DSM 158 / JCM 6121 / CCUG 31486 / LMG 2827 / NBRC 12203 / NCIMB 8253 / ATH 2.4.1.) (Rhodobacter sphaeroides).